Consider the following 188-residue polypeptide: MLQLHPSDIKDVVLNGGVIAYPTEAVYGLGCDPDNDTAIQKLLAVKQRPWQKGLILVASEFSQLLAYVDESQLTDEQLELAFSKWPGPFTFVMPIKPHVSRYLCGEFDSIAVRVSAHEGVRALCQALGKPLVSTSANLAGEDPALSGDEILNVFEGKIDALVLGQLGEQRQPSTIIDARSGKILRNGQ.

Positions 3–188 (QLHPSDIKDV…RSGKILRNGQ (186 aa)) constitute a YrdC-like domain.

The protein belongs to the SUA5 family. TsaC subfamily.

Its subcellular location is the cytoplasm. The enzyme catalyses L-threonine + hydrogencarbonate + ATP = L-threonylcarbamoyladenylate + diphosphate + H2O. Required for the formation of a threonylcarbamoyl group on adenosine at position 37 (t(6)A37) in tRNAs that read codons beginning with adenine. Catalyzes the conversion of L-threonine, HCO(3)(-)/CO(2) and ATP to give threonylcarbamoyl-AMP (TC-AMP) as the acyladenylate intermediate, with the release of diphosphate. The sequence is that of Threonylcarbamoyl-AMP synthase from Shewanella oneidensis (strain ATCC 700550 / JCM 31522 / CIP 106686 / LMG 19005 / NCIMB 14063 / MR-1).